A 137-amino-acid chain; its full sequence is DNA polymerase III subunit psi (137 aa).

It belongs to the DNA polymerase III psi/HolD chain family. As to quaternary structure, the DNA polymerase III holoenzyme complex contains at least 10 different subunits organized into 3 functionally essential subassemblies: the Pol III core, the beta sliding clamp processivity factor and the clamp-loading complex. The Pol III core (subunits alpha, epsilon and theta) contains the polymerase and the 3'-5' exonuclease proofreading activities. The polymerase is tethered to the template via the dimeric beta sliding clamp processivity factor. The clamp-loading complex (also called gamma complex) assembles the beta sliding clamp onto the primed template and plays a central role in the organization and communication at the replication fork. The clamp-loading complex contains delta, delta', psi and chi, and 3 copies of either or both of two different DnaX proteins, gamma and tau. The DNA replisome complex has a single clamp loader (3 tau and 1 each of delta, delta', psi and chi subunits) which binds 3 Pol III cores (1 core on the leading strand and 2 on the lagging strand) each with a beta sliding clamp dimer. Additional proteins in the replisome are other copies of gamma, psi (this protein) and chi (holC), SSB, DNA helicase and RNA primase. The clamp loader hydrolyzes ATP to assemble the beta processivity factor onto the primed template and plays a central role in the organization and communication at the replication fork. Interacts directly with the chi subunit (holC).

The catalysed reaction is DNA(n) + a 2'-deoxyribonucleoside 5'-triphosphate = DNA(n+1) + diphosphate. Part of the beta sliding clamp loading complex, which hydrolyzes ATP to load the beta clamp onto primed DNA to form the DNA replication pre-initiation complex. DNA polymerase III is a complex, multichain enzyme responsible for most of the replicative synthesis in bacteria. This DNA polymerase also exhibits 3' to 5' exonuclease activity. In Escherichia coli (strain K12), this protein is DNA polymerase III subunit psi.